Consider the following 115-residue polypeptide: U3-lycotoxin-Ls1r (115 aa).

Residues 1–20 (MKFVLLFGVLLVTLFSYSSA) form the signal peptide. The propeptide occupies 21–44 (EMLDDFHQADEDELVSLIKKEEAR). Cystine bridges form between Cys48/Cys63, Cys55/Cys72, Cys62/Cys87, and Cys74/Cys85.

The protein belongs to the neurotoxin 19 (CSTX) family. 01 subfamily. In terms of tissue distribution, expressed by the venom gland.

It is found in the secreted. The sequence is that of U3-lycotoxin-Ls1r from Lycosa singoriensis (Wolf spider).